Here is a 116-residue protein sequence, read N- to C-terminus: Endocuticle structural glycoprotein ABD-4 (116 aa).

The residue at position 1 (Gln1) is a Pyrrolidone carboxylic acid. In terms of domain architecture, Chitin-binding type R&amp;R spans 20-92 (DGSYQWNYET…PQGAHFPTPP (73 aa)). Positions 78–97 (ENGFVPQGAHFPTPPPIPPA) are disordered. O-linked (GalNAc) threonine; in ADB-4A, ABD-4B and ABD-4C glycosylation is present at Thr90. An O-linked (GalNAc) threonine; in ADB-4A and ABD-4B glycan is attached at Thr107. Thr111 is a glycosylation site (O-linked (GalNAc) threonine; in ADB-4A). Pro116 is modified (proline amide).

In terms of processing, 3 variants exists that arise from a sequential glycosylation with N-acetylgalactosamine at three (ABD-4A), two (ABD-4B) or one (ABD-4C) threonine residues.

Its function is as follows. Component of the soft endocuticle of migratory locust. This chain is Endocuticle structural glycoprotein ABD-4, found in Locusta migratoria (Migratory locust).